We begin with the raw amino-acid sequence, 238 residues long: Uridylate kinase (238 aa).

ATP is bound at residue 11 to 14 (KLSG). Gly52 contributes to the UMP binding site. ATP is bound by residues Gly53 and Arg57. UMP is bound by residues Asp72 and 134–141 (TGFSYFTT). ATP contacts are provided by Asn162, Tyr168, and Asp171.

Belongs to the UMP kinase family. As to quaternary structure, homohexamer.

The protein resides in the cytoplasm. It carries out the reaction UMP + ATP = UDP + ADP. Its pathway is pyrimidine metabolism; CTP biosynthesis via de novo pathway; UDP from UMP (UMPK route): step 1/1. With respect to regulation, inhibited by UTP. Its function is as follows. Catalyzes the reversible phosphorylation of UMP to UDP. In Mesoplasma florum (strain ATCC 33453 / NBRC 100688 / NCTC 11704 / L1) (Acholeplasma florum), this protein is Uridylate kinase.